We begin with the raw amino-acid sequence, 184 residues long: GMP synthase [glutamine-hydrolyzing] subunit A (184 aa).

Residues 3-184 enclose the Glutamine amidotransferase type-1 domain; the sequence is RIVVVDNHGQ…ENFRDICAGD (182 aa). Cys73 (nucleophile) is an active-site residue. Residues His161 and Glu163 contribute to the active site.

As to quaternary structure, heterodimer composed of a glutamine amidotransferase subunit (A) and a GMP-binding subunit (B).

It catalyses the reaction XMP + L-glutamine + ATP + H2O = GMP + L-glutamate + AMP + diphosphate + 2 H(+). It participates in purine metabolism; GMP biosynthesis; GMP from XMP (L-Gln route): step 1/1. Catalyzes the synthesis of GMP from XMP. This is GMP synthase [glutamine-hydrolyzing] subunit A from Natronomonas pharaonis (strain ATCC 35678 / DSM 2160 / CIP 103997 / JCM 8858 / NBRC 14720 / NCIMB 2260 / Gabara) (Halobacterium pharaonis).